A 251-amino-acid polypeptide reads, in one-letter code: Elongator complex protein 6 (251 aa).

It belongs to the ELP6 family. In terms of assembly, component of the elongator complex composed of Elp1, Elp2, Elp3, Elp4, Elp5 and Elp6. The elongator complex associates with and stabilizes microtubules; efficient interaction requires the full complex. Interacts with InR/Insulin-like receptor; the interaction may stabilize Elp6.

Its subcellular location is the cytoplasm. The protein localises to the nucleus. The protein resides in the cytoskeleton. It localises to the spindle. The protein operates within tRNA modification; 5-methoxycarbonylmethyl-2-thiouridine-tRNA biosynthesis. Functionally, component of the elongator complex, which is required for multiple tRNA modifications, including mcm5U (5-methoxycarbonylmethyl uridine), mcm5s2U (5-methoxycarbonylmethyl-2-thiouridine), and ncm5U (5-carbamoylmethyl uridine). The elongator complex catalyzes formation of carboxymethyluridine in the wobble base at position 34 in tRNAs. Binding by the elongator complex stabilizes microtubules and promotes their growth. This induces central spindle asymmetry, promoting polarized signaling endosome trafficking during asymmetric cell division and cell fate assignation of sensory organ precursor cells. Required in germ line cells for microtubule organization involved in oocyte polarization and chromosome organization. Involved in InR-TOR (insulin-like receptor-target of rapamycin) signaling regulation of cellular metabolism, autophagy and apoptosis. This Drosophila melanogaster (Fruit fly) protein is Elongator complex protein 6.